A 112-amino-acid polypeptide reads, in one-letter code: uncharacterized protein (112 aa).

Helical transmembrane passes span 55-75 (LLEI…PTLF) and 91-111 (LIML…LLLL).

It is found in the membrane. This is an uncharacterized protein from Saccharomyces cerevisiae (strain ATCC 204508 / S288c) (Baker's yeast).